Consider the following 118-residue polypeptide: Large ribosomal subunit protein bL21c (118 aa).

The protein belongs to the bacterial ribosomal protein bL21 family. As to quaternary structure, part of the 50S ribosomal subunit.

Its subcellular location is the plastid. The protein localises to the chloroplast. Its function is as follows. This protein binds to 23S rRNA. The protein is Large ribosomal subunit protein bL21c of Zygnema circumcarinatum (Green alga).